Here is a 412-residue protein sequence, read N- to C-terminus: Gamma-glutamyl phosphate reductase (412 aa).

This sequence belongs to the gamma-glutamyl phosphate reductase family.

Its subcellular location is the cytoplasm. It catalyses the reaction L-glutamate 5-semialdehyde + phosphate + NADP(+) = L-glutamyl 5-phosphate + NADPH + H(+). The protein operates within amino-acid biosynthesis; L-proline biosynthesis; L-glutamate 5-semialdehyde from L-glutamate: step 2/2. Catalyzes the NADPH-dependent reduction of L-glutamate 5-phosphate into L-glutamate 5-semialdehyde and phosphate. The product spontaneously undergoes cyclization to form 1-pyrroline-5-carboxylate. In Actinobacillus pleuropneumoniae serotype 3 (strain JL03), this protein is Gamma-glutamyl phosphate reductase.